Consider the following 392-residue polypeptide: Formate-dependent phosphoribosylglycinamide formyltransferase (392 aa).

N(1)-(5-phospho-beta-D-ribosyl)glycinamide-binding positions include E22–L23 and E82. ATP is bound by residues R114, K155, S160–Q165, E195–V198, and E203. Residues R119 to L308 enclose the ATP-grasp domain. E267 and E279 together coordinate Mg(2+). N(1)-(5-phospho-beta-D-ribosyl)glycinamide is bound by residues D286, K355, and R362–R363.

The protein belongs to the PurK/PurT family. In terms of assembly, homodimer.

The enzyme catalyses N(1)-(5-phospho-beta-D-ribosyl)glycinamide + formate + ATP = N(2)-formyl-N(1)-(5-phospho-beta-D-ribosyl)glycinamide + ADP + phosphate + H(+). Its pathway is purine metabolism; IMP biosynthesis via de novo pathway; N(2)-formyl-N(1)-(5-phospho-D-ribosyl)glycinamide from N(1)-(5-phospho-D-ribosyl)glycinamide (formate route): step 1/1. In terms of biological role, involved in the de novo purine biosynthesis. Catalyzes the transfer of formate to 5-phospho-ribosyl-glycinamide (GAR), producing 5-phospho-ribosyl-N-formylglycinamide (FGAR). Formate is provided by PurU via hydrolysis of 10-formyl-tetrahydrofolate. This Salmonella paratyphi B (strain ATCC BAA-1250 / SPB7) protein is Formate-dependent phosphoribosylglycinamide formyltransferase.